The primary structure comprises 494 residues: Cobyric acid synthase (494 aa).

The 198-residue stretch at 248 to 445 (ELEIAVLKLP…LHGIFDNGPW (198 aa)) folds into the GATase cobBQ-type domain. C329 serves as the catalytic Nucleophile. Residue H437 is part of the active site.

The protein belongs to the CobB/CobQ family. CobQ subfamily.

It participates in cofactor biosynthesis; adenosylcobalamin biosynthesis. Functionally, catalyzes amidations at positions B, D, E, and G on adenosylcobyrinic A,C-diamide. NH(2) groups are provided by glutamine, and one molecule of ATP is hydrogenolyzed for each amidation. The protein is Cobyric acid synthase of Synechococcus sp. (strain WH7803).